The chain runs to 369 residues: CLIP domain-containing serine protease HP8 (369 aa).

A signal peptide spans 1–24 (MKTPFEKIRIISCILVIVSTNVVG). Positions 25–81 (QKCNGGANCIPLEECTDLFQQLKQGNSPQLTRLLRGLHCGFEDLNSPKICCPPEFLA) are excised as a propeptide. The Clip domain maps to 26–75 (KCNGGANCIPLEECTDLFQQLKQGNSPQLTRLLRGLHCGFEDLNSPKICC). 8 disulfide bridges follow: C27–C74, C33–C63, C39–C75, C105–C239, C142–C158, C186–C191, C286–C303, and C313–C344. The Peptidase S1 domain maps to 113-368 (IFGGIQTEID…FMDWILSKLE (256 aa)). Residue H157 is the Charge relay system of the active site. The Ca(2+) site is built by E177, N179, T182, and D185. N-linked (GlcNAc...) asparagine glycosylation is present at N179. D219 functions as the Charge relay system in the catalytic mechanism. The active-site Charge relay system is S317.

Belongs to the peptidase S1 family. CLIP subfamily. In the active form, heterodimer of a light chain and a heavy chain; disulfide-linked. Proteolytically cleaved for activation. Cleavage produces a light chain and a catalytic heavy chain which remains covalently associated probably through an interchain disulfide bond. In terms of tissue distribution, in larvae, expressed in the fat body and hemocytes.

It localises to the secreted. Its subcellular location is the cytoplasm. Inhibited by (p-amidinophenyl) methanesulfonyl fluoride, p-nitrophenyl-p'-guanidinobenzoate, D-phenylalanyl-L-prolyl-L-arginyl chloromethane, leupeptin, antipain and to a lesser extent by antithrombin III. Its function is as follows. Endopeptidase with selective post-Arg cleavage site. Functions in the innate immune response to fungal and Gram-positive bacterial infections. Upon pathogen infection promotes nodulation; a cellular defense response in which hemocytes surround and isolate invading pathogens forming aggregates called nodules. Involved in activating nodule formation in response to infection with M.luteus, E.coli or S.cerevisiae. Able to bind the microbes M.luteus, E.coli or S.cerevisiae. According to another report, does not bind microorganisms. This is CLIP domain-containing serine protease HP8 from Bombyx mori (Silk moth).